The primary structure comprises 252 residues: MSTLVTLNKISVTFGSRRVLNDISLSLRPGRILTLLGPNGAGKSTLVRVVLGLIAPTSGSIIREPGLRIGYVPQKLHLDTTLPLTVSRFMRLKPGVRKADILPALKRVHAAHLLDQPMQKLSGGENQRVLLARALLNRPQLLVLDEPTQGVDVNGQLALYDLIEQLRRELGCAVLMVSHDLHLVMAKTDEVLCLNQHICCSGAPEVVSTHPEFIAMFGQRGAEQLAVYRHHHNHRHDLHGKIILKNSGSRGA.

The ABC transporter domain occupies 5–220 (VTLNKISVTF…PEFIAMFGQR (216 aa)). ATP is bound at residue 37–44 (GPNGAGKS).

The protein belongs to the ABC transporter superfamily. Zinc importer (TC 3.A.1.15.5) family. As to quaternary structure, the complex is composed of two ATP-binding proteins (ZnuC), two transmembrane proteins (ZnuB) and a solute-binding protein (ZnuA).

The protein resides in the cell inner membrane. The catalysed reaction is Zn(2+)(out) + ATP(in) + H2O(in) = Zn(2+)(in) + ADP(in) + phosphate(in) + H(+)(in). Its function is as follows. Part of the ABC transporter complex ZnuABC involved in zinc import. Responsible for energy coupling to the transport system. This is Zinc import ATP-binding protein ZnuC from Yersinia enterocolitica serotype O:8 / biotype 1B (strain NCTC 13174 / 8081).